The following is a 145-amino-acid chain: [Ribosomal protein bS18]-alanine N-acetyltransferase (145 aa).

The N-acetyltransferase domain occupies 1 to 145; the sequence is MIETIVEQDF…ENAVIMALYL (145 aa). Residue 67–69 participates in acetyl-CoA binding; it reads LAV. Residue E101 is the Proton acceptor of the active site. N106 contacts acetyl-CoA. The active-site Proton donor is Y113.

It belongs to the acetyltransferase family. RimI subfamily.

It localises to the cytoplasm. The enzyme catalyses N-terminal L-alanyl-[ribosomal protein bS18] + acetyl-CoA = N-terminal N(alpha)-acetyl-L-alanyl-[ribosomal protein bS18] + CoA + H(+). Its function is as follows. Acetylates the N-terminal alanine of ribosomal protein bS18. The polypeptide is [Ribosomal protein bS18]-alanine N-acetyltransferase (Haemophilus ducreyi (strain 35000HP / ATCC 700724)).